Here is a 350-residue protein sequence, read N- to C-terminus: Methylthioribose-1-phosphate isomerase (350 aa).

Residues 47–49, Arg-90, and Gln-197 contribute to the substrate site; that span reads RGA. The active-site Proton donor is Asp-238. 248 to 249 is a substrate binding site; that stretch reads NK.

It belongs to the eIF-2B alpha/beta/delta subunits family. MtnA subfamily.

The enzyme catalyses 5-(methylsulfanyl)-alpha-D-ribose 1-phosphate = 5-(methylsulfanyl)-D-ribulose 1-phosphate. The protein operates within amino-acid biosynthesis; L-methionine biosynthesis via salvage pathway; L-methionine from S-methyl-5-thio-alpha-D-ribose 1-phosphate: step 1/6. In terms of biological role, catalyzes the interconversion of methylthioribose-1-phosphate (MTR-1-P) into methylthioribulose-1-phosphate (MTRu-1-P). This is Methylthioribose-1-phosphate isomerase from Nitratidesulfovibrio vulgaris (strain DP4) (Desulfovibrio vulgaris).